Consider the following 340-residue polypeptide: HTH-type transcriptional regulator PtxS (340 aa).

One can recognise an HTH lacI-type domain in the interval 12–67 (VTINQVAEAAGVSKASVSRYIGGDRQLLADATARRIERAIDQLDYRPNQMARGLKR). The segment at residues 14–33 (INQVAEAAGVSKASVSRYIG) is a DNA-binding region (H-T-H motif).

In terms of assembly, interacts with PtxR in the absence of 2-ketogluconate. Binding of the 2-ketogluconate effector to PtxS causes PtxS/PtxR complex dissociation.

With respect to regulation, 2-ketogluconate acts as a molecular effector and causes dissociation of the PtxS/PtxR complex. Functionally, negatively regulates glucose metabolism by binding directly to the promoter region of the kgu and gad operons. It also negatively regulates its own synthesis. Its function is as follows. In addition, in pathogenic strains, PtxS modulates PtxR activity in response to 2-ketogluconate. In the presence of PtxR, which also binds to the kgu and gad promoter regions, PtxS and PtxR form a tight complex, creating a DNA-loop that prevents RNA polymerase promoter access and expression of the glucose metabolism genes. Binding of the 2-ketogluconate effector to PtxS causes PtxS/PtxR complex dissociation and leads to the dissolution of the repression DNA-loop, facilitating the entry of the RNA polymerase and enabling the transcription of the genes. Also plays an important role in the regulation of the expression of the virulence factor exotoxin A (toxA). PtxS does not bind directly to the toxA promoter but negatively regulates the production of exotoxin A by binding to PtxR and interfering with its positive regulator activity. In the presence of 2-ketogluconate, PtxS is released and PtxR can recruit RNA polymerase. This chain is HTH-type transcriptional regulator PtxS, found in Pseudomonas aeruginosa (strain ATCC 15692 / DSM 22644 / CIP 104116 / JCM 14847 / LMG 12228 / 1C / PRS 101 / PAO1).